Consider the following 445-residue polypeptide: UDP-N-acetylmuramoylalanine--D-glutamate ligase (445 aa).

117-123 (GSNGKTT) is an ATP binding site.

The protein belongs to the MurCDEF family.

Its subcellular location is the cytoplasm. It carries out the reaction UDP-N-acetyl-alpha-D-muramoyl-L-alanine + D-glutamate + ATP = UDP-N-acetyl-alpha-D-muramoyl-L-alanyl-D-glutamate + ADP + phosphate + H(+). It functions in the pathway cell wall biogenesis; peptidoglycan biosynthesis. Cell wall formation. Catalyzes the addition of glutamate to the nucleotide precursor UDP-N-acetylmuramoyl-L-alanine (UMA). This is UDP-N-acetylmuramoylalanine--D-glutamate ligase from Neisseria meningitidis serogroup B (strain ATCC BAA-335 / MC58).